A 215-amino-acid chain; its full sequence is 3-dehydroquinate dehydratase (215 aa).

3-dehydroquinate is bound by residues 30–32 (EVR) and R62. The Proton donor/acceptor role is filled by H114. K140 acts as the Schiff-base intermediate with substrate in catalysis. 3-dehydroquinate contacts are provided by R178 and Q201.

The protein belongs to the type-I 3-dehydroquinase family. As to quaternary structure, homodimer.

It catalyses the reaction 3-dehydroquinate = 3-dehydroshikimate + H2O. Its pathway is metabolic intermediate biosynthesis; chorismate biosynthesis; chorismate from D-erythrose 4-phosphate and phosphoenolpyruvate: step 3/7. Its function is as follows. Involved in the third step of the chorismate pathway, which leads to the biosynthesis of aromatic amino acids. Catalyzes the cis-dehydration of 3-dehydroquinate (DHQ) and introduces the first double bond of the aromatic ring to yield 3-dehydroshikimate. In Methanopyrus kandleri (strain AV19 / DSM 6324 / JCM 9639 / NBRC 100938), this protein is 3-dehydroquinate dehydratase.